A 210-amino-acid chain; its full sequence is uncharacterized protein (210 aa).

The next 6 membrane-spanning stretches (helical) occupy residues 9–29, 35–55, 64–84, 91–111, 149–169, and 190–210; these read WVVT…IIAK, LIVN…MAWP, GPAV…VVAV, GLYG…AAMN, IWFS…AVFW, and IGQA…LFPV.

It is found in the cell membrane. This is an uncharacterized protein from Mycobacterium bovis (strain ATCC BAA-935 / AF2122/97).